We begin with the raw amino-acid sequence, 301 residues long: Methionyl-tRNA formyltransferase (301 aa).

S109–P112 is a (6S)-5,6,7,8-tetrahydrofolate binding site.

It belongs to the Fmt family.

It carries out the reaction L-methionyl-tRNA(fMet) + (6R)-10-formyltetrahydrofolate = N-formyl-L-methionyl-tRNA(fMet) + (6S)-5,6,7,8-tetrahydrofolate + H(+). Functionally, attaches a formyl group to the free amino group of methionyl-tRNA(fMet). The formyl group appears to play a dual role in the initiator identity of N-formylmethionyl-tRNA by promoting its recognition by IF2 and preventing the misappropriation of this tRNA by the elongation apparatus. This is Methionyl-tRNA formyltransferase from Ruegeria pomeroyi (strain ATCC 700808 / DSM 15171 / DSS-3) (Silicibacter pomeroyi).